Here is a 97-residue protein sequence, read N- to C-terminus: MLKREEVQHVAHLARLELTEEEEIQFTEQLTDILAYVEQLKELDTEGVEPTFHVLDMELPTRPDEVEPYPDIEGILANAPDRADMFFKVPRILEGED.

The protein belongs to the GatC family. Heterotrimer of A, B and C subunits.

The catalysed reaction is L-glutamyl-tRNA(Gln) + L-glutamine + ATP + H2O = L-glutaminyl-tRNA(Gln) + L-glutamate + ADP + phosphate + H(+). It catalyses the reaction L-aspartyl-tRNA(Asn) + L-glutamine + ATP + H2O = L-asparaginyl-tRNA(Asn) + L-glutamate + ADP + phosphate + 2 H(+). Functionally, allows the formation of correctly charged Asn-tRNA(Asn) or Gln-tRNA(Gln) through the transamidation of misacylated Asp-tRNA(Asn) or Glu-tRNA(Gln) in organisms which lack either or both of asparaginyl-tRNA or glutaminyl-tRNA synthetases. The reaction takes place in the presence of glutamine and ATP through an activated phospho-Asp-tRNA(Asn) or phospho-Glu-tRNA(Gln). The protein is Aspartyl/glutamyl-tRNA(Asn/Gln) amidotransferase subunit C of Synechococcus sp. (strain JA-2-3B'a(2-13)) (Cyanobacteria bacterium Yellowstone B-Prime).